The sequence spans 50 residues: DNA replication protein repEA (50 aa).

Its function is as follows. Involved in T4 DNA replication. Binds to ssDNA. This Enterobacteria phage T4 (Bacteriophage T4) protein is DNA replication protein repEA (repEA).